A 968-amino-acid polypeptide reads, in one-letter code: Isoleucine--tRNA ligase (968 aa).

Residues 68 to 78 (PYANGALHMGH) carry the 'HIGH' region motif. Glutamate 582 contributes to the L-isoleucyl-5'-AMP binding site. The 'KMSKS' region motif lies at 623 to 627 (KMSKS). Lysine 626 lines the ATP pocket. Residues cysteine 936, cysteine 939, cysteine 956, and cysteine 959 each contribute to the Zn(2+) site.

It belongs to the class-I aminoacyl-tRNA synthetase family. IleS type 1 subfamily. As to quaternary structure, monomer. Zn(2+) serves as cofactor.

It localises to the cytoplasm. It catalyses the reaction tRNA(Ile) + L-isoleucine + ATP = L-isoleucyl-tRNA(Ile) + AMP + diphosphate. Functionally, catalyzes the attachment of isoleucine to tRNA(Ile). As IleRS can inadvertently accommodate and process structurally similar amino acids such as valine, to avoid such errors it has two additional distinct tRNA(Ile)-dependent editing activities. One activity is designated as 'pretransfer' editing and involves the hydrolysis of activated Val-AMP. The other activity is designated 'posttransfer' editing and involves deacylation of mischarged Val-tRNA(Ile). The sequence is that of Isoleucine--tRNA ligase from Prochlorococcus marinus (strain MIT 9301).